The primary structure comprises 591 residues: Aspartate--tRNA(Asp/Asn) ligase (591 aa).

Glu176 serves as a coordination point for L-aspartate. Residues 200-203 form an aspartate region; sequence QLFK. Arg222 is a binding site for L-aspartate. ATP-binding positions include 222–224 and Gln231; that span reads RDE. L-aspartate is bound at residue His450. Glu484 lines the ATP pocket. Arg491 contributes to the L-aspartate binding site. 536 to 539 is a binding site for ATP; it reads GLDR.

Belongs to the class-II aminoacyl-tRNA synthetase family. Type 1 subfamily. Homodimer.

The protein resides in the cytoplasm. The enzyme catalyses tRNA(Asx) + L-aspartate + ATP = L-aspartyl-tRNA(Asx) + AMP + diphosphate. Aspartyl-tRNA synthetase with relaxed tRNA specificity since it is able to aspartylate not only its cognate tRNA(Asp) but also tRNA(Asn). Reaction proceeds in two steps: L-aspartate is first activated by ATP to form Asp-AMP and then transferred to the acceptor end of tRNA(Asp/Asn). The sequence is that of Aspartate--tRNA(Asp/Asn) ligase from Bacillus thuringiensis (strain Al Hakam).